A 140-amino-acid polypeptide reads, in one-letter code: MGARRTGRERALQALYQLEMATATTAEALESAWSAAEESNKRDPDAVKFARELVEGVQSHRDEIDQLIERHSHNWRLDRMSRIDRNVLRLGIFELKYRPDIPRKVSINEAVELGKNFGNEESSAFVNGLLDRVAVALNKP.

The protein belongs to the NusB family.

Functionally, involved in transcription antitermination. Required for transcription of ribosomal RNA (rRNA) genes. Binds specifically to the boxA antiterminator sequence of the ribosomal RNA (rrn) operons. The chain is Transcription antitermination protein NusB from Myxococcus xanthus (strain DK1622).